A 428-amino-acid polypeptide reads, in one-letter code: Proline--tRNA ligase (428 aa).

This sequence belongs to the class-II aminoacyl-tRNA synthetase family. ProS type 2 subfamily. As to quaternary structure, homodimer.

The protein localises to the cytoplasm. It carries out the reaction tRNA(Pro) + L-proline + ATP = L-prolyl-tRNA(Pro) + AMP + diphosphate. Its function is as follows. Catalyzes the attachment of proline to tRNA(Pro) in a two-step reaction: proline is first activated by ATP to form Pro-AMP and then transferred to the acceptor end of tRNA(Pro). This chain is Proline--tRNA ligase, found in Rickettsia typhi (strain ATCC VR-144 / Wilmington).